The following is a 435-amino-acid chain: Proline and serine-rich protein 2 (435 aa).

The segment covering 1–10 (MPVTHRKSDA) has biased composition (basic and acidic residues). Residues 1-22 (MPVTHRKSDASDMNSDTSPSCR) form a disordered region. At serine 8 the chain carries Phosphoserine. Positions 11-20 (SDMNSDTSPS) are enriched in polar residues. Serine 43 is subject to Phosphoserine. A Phosphothreonine modification is found at threonine 45. Low complexity-rich tracts occupy residues 92–102 (PSLEESTSSPS) and 113–126 (PAPG…LPEG). 2 disordered regions span residues 92–276 (PSLE…RAAV) and 295–420 (AFPA…SEEA). A Phosphothreonine modification is found at threonine 146. Positions 146-169 (TPPPPDPPAPETLLAPPPLPSTPD) are enriched in pro residues. Residue serine 166 is modified to Phosphoserine. Threonine 167 carries the post-translational modification Phosphothreonine. A phosphoserine mark is found at serine 179, serine 212, and serine 215. Positions 228-237 (PAARGPRSGD) are enriched in low complexity. Residue arginine 252 is modified to Asymmetric dimethylarginine; alternate. Arginine 252 bears the Omega-N-methylarginine; alternate mark. The segment covering 302–311 (AGEGAPGGGS) has biased composition (gly residues). The residue at position 312 (serine 312) is a Phosphoserine. Position 320 is an omega-N-methylarginine; alternate (arginine 320). Arginine 320 is modified (dimethylated arginine; alternate). At arginine 378 the chain carries Omega-N-methylarginine. Serine 400 bears the Phosphoserine mark. The residue at position 414 (arginine 414) is an Omega-N-methylarginine.

This chain is Proline and serine-rich protein 2 (PROSER2), found in Homo sapiens (Human).